The chain runs to 433 residues: Acetyl-CoA-benzylalcohol acetyltransferase (433 aa).

Active-site proton acceptor residues include His152 and Asp377.

It belongs to the plant acyltransferase family.

It carries out the reaction benzyl alcohol + acetyl-CoA = benzyl acetate + CoA. The enzyme catalyses (E)-cinnamyl alcohol + acetyl-CoA = (E)-cinnamyl acetate + CoA. Involved in the biosynthesis of benzyl acetate, a major constituent of the floral scent. Can use benzylalcohol, cinnamylalcohol, 3-cis-hexene-1-ol or heptanol as substrates. Has some activity with 2-phenylethanol and 2-naphtalene-ethanol. The sequence is that of Acetyl-CoA-benzylalcohol acetyltransferase (BEAT) from Clarkia breweri (Fairy fans).